Reading from the N-terminus, the 380-residue chain is MTTEEDMRSSSSESSPKSFLSLPYDVVFNCLSRVSRTHDPILSLVSKSFRSLLALPDLEAERFRILKNETCLYVCLNLNNNNNPNPSWFILSQTPKHKLIPLPSLPYPDPHPNCSTVVSTGSEIYLLGGFVAKEKRSRRAYVLDCKSHQWRRLPKMRIARKEAAANVIDGKINVYGGCSSEYHNSVNWGEIYDPMTQTWEPFPEGALNKEGVIPCALIKDGIAFPDCGLLISGKVYDTTTMDTLDYNTPMDKLDLCPNVCMLKIDNQDFQASVSDGKLKLVRCRGAMAWHWTVGGLEELSCNYLLSVASPGGGRRVTVWWKTYTKECKTEIWCALILLERELVWGVIEWSENVFTLPGSESDSDSNSFLLHYELVTLARH.

The 51-residue stretch at 16 to 66 (PKSFLSLPYDVVFNCLSRVSRTHDPILSLVSKSFRSLLALPDLEAERFRIL) folds into the F-box domain. Kelch repeat units follow at residues 123 to 170 (EIYL…VIDG) and 172 to 219 (INVY…ALIK).

The sequence is that of Putative F-box/kelch-repeat protein At2g44030 from Arabidopsis thaliana (Mouse-ear cress).